A 237-amino-acid chain; its full sequence is Immunoglobulin superfamily member 6 (237 aa).

A signal peptide spans 1-27; that stretch reads MGPVSARRSRLRPEISLILFQVGMVGA. The Extracellular portion of the chain corresponds to 28 to 152; that stretch reads CTVYVLQPGY…ERLFSKEVRS (125 aa). In terms of domain architecture, Ig-like C2-type spans 30-134; that stretch reads VYVLQPGYLE…ELSPSAKHVG (105 aa). The cysteines at positions 51 and 118 are disulfide-linked. The chain crosses the membrane as a helical span at residues 153 to 173; the sequence is FLIVLLALLSVYITGVCVTFI. At 174 to 237 the chain is on the cytoplasmic side; the sequence is VLFKSKSNGP…RKALPNPGRA (64 aa). A compositionally biased stretch (basic and acidic residues) spans 215 to 229; it reads TSHLPEQEGTDENRK. The segment at 215-237 is disordered; it reads TSHLPEQEGTDENRKALPNPGRA.

As to expression, ubiquitous with higher expression in immune tissue.

The protein resides in the membrane. In Mus musculus (Mouse), this protein is Immunoglobulin superfamily member 6 (Igsf6).